The sequence spans 822 residues: SKI/DACH domain-containing protein 1 (822 aa).

Basic residues predominate over residues 245 to 261 (HHHHHHHHHHHHHHHRA). The disordered stretch occupies residues 245–370 (HHHHHHHHHH…SSSGSSQVSV (126 aa)). Low complexity predominate over residues 278–318 (PHLGSFPESCSSDSESSSYSDHAANDSDFGSSLSSSSNSVS). Over residues 319-338 (SEEEEEEGEEEEEEEEEEEG) the composition is skewed to acidic residues. Residue K602 forms a Glycyl lysine isopeptide (Lys-Gly) (interchain with G-Cter in SUMO2) linkage. Disordered stretches follow at residues 658–677 (ETPS…TLGS) and 706–732 (LQTP…THEG). Polar residues predominate over residues 660–675 (PSLNPLAQSQGLSCTL).

Belongs to the DACH/dachshund family.

The protein is SKI/DACH domain-containing protein 1 (Skida1) of Mus musculus (Mouse).